Reading from the N-terminus, the 302-residue chain is DNA-directed RNA polymerase II subunit rpb3 (302 aa).

Belongs to the archaeal Rpo3/eukaryotic RPB3 RNA polymerase subunit family. As to quaternary structure, component of the RNA polymerase II (Pol II) complex consisting of 12 subunits.

Its subcellular location is the nucleus. Functionally, DNA-dependent RNA polymerase catalyzes the transcription of DNA into RNA using the four ribonucleoside triphosphates as substrates. Component of RNA polymerase II which synthesizes mRNA precursors and many functional non-coding RNAs. Pol II is the central component of the basal RNA polymerase II transcription machinery. It is composed of mobile elements that move relative to each other. Rpb3 is part of the core element with the central large cleft and the clamp element that moves to open and close the cleft. The sequence is that of DNA-directed RNA polymerase II subunit rpb3 (polr2c) from Dictyostelium discoideum (Social amoeba).